Consider the following 912-residue polypeptide: Receptor protein kinase WSS1 (912 aa).

The first 27 residues, 1–27, serve as a signal peptide directing secretion; sequence MGRDARRLPLLPFLLLLLAAAAGVAES. Topologically, residues 28-477 are extracellular; that stretch reads ATDAEAIHDL…AGGGKSKPNT (450 aa). LRR repeat units follow at residues 64 to 88, 89 to 111, and 112 to 134; these read AGKVTELNLADRGLSGTLPDSLSSL, TSLTALQLQGNALTGAVPSLARM, and GSLARLALDGNAFTSLPPDFLHG. Asn-159, Asn-170, Asn-196, Asn-256, Asn-286, Asn-371, Asn-376, Asn-387, and Asn-400 each carry an N-linked (GlcNAc...) asparagine glycan. 6 LRR repeats span residues 184 to 208, 235 to 261, 281 to 303, 364 to 388, 389 to 411, and 413 to 438; these read LVSLRNLRLSYNNLTGGLPPELSSL, MKSLKLLWIQSNKFTGPIPDLNGTQLE, LMSLKNVSLSNNNFQGPKPAFAA, SSDVSMINLSRKNLSGRISPALANL, TRLARLDLSNNNLTGVIPDVLTT, and PSLTVLNVANNRLTGEVPKFKPSVNV. The interval 448–472 is disordered; sequence SSGSSGGGGGSDGDSSSSDSAGGGK. Residues 478–498 form a helical membrane-spanning segment; the sequence is GMIIGIIVAVIILFACIALLV. At 499-912 the chain is on the cytoplasmic side; sequence HHRKKKNVEK…SFNVPRKYNG (414 aa). The Protein kinase domain maps to 580 to 859; sequence FSEDCILGRG…HCVNRLSSLV (280 aa). ATP contacts are provided by residues 586–594 and Lys-607; that span reads LGRGGFGVV. Asp-708 acts as the Proton acceptor in catalysis.

This sequence belongs to the protein kinase superfamily. Ser/Thr protein kinase family. It depends on Mn(2+) as a cofactor. As to expression, expressed in young and mature leaves.

It localises to the cell membrane. It catalyses the reaction L-seryl-[protein] + ATP = O-phospho-L-seryl-[protein] + ADP + H(+). It carries out the reaction L-threonyl-[protein] + ATP = O-phospho-L-threonyl-[protein] + ADP + H(+). In terms of biological role, transmembrane kinase receptor involved in the regulation of reactive oxygen species (ROS) homeostasis, chloroplast development and leaf senescence. The sequence is that of Receptor protein kinase WSS1 from Oryza sativa subsp. japonica (Rice).